A 306-amino-acid chain; its full sequence is Ornithine carbamoyltransferase (306 aa).

Residues 53–56 (STRT), Q80, R104, and 131–134 (HPCQ) each bind carbamoyl phosphate. Residues N162, D219, and 223–224 (SM) each bind L-ornithine. Carbamoyl phosphate-binding positions include 259–260 (CL) and R287.

Belongs to the aspartate/ornithine carbamoyltransferase superfamily. OTCase family.

It localises to the cytoplasm. It catalyses the reaction carbamoyl phosphate + L-ornithine = L-citrulline + phosphate + H(+). It participates in amino-acid biosynthesis; L-arginine biosynthesis; L-arginine from L-ornithine and carbamoyl phosphate: step 1/3. In terms of biological role, reversibly catalyzes the transfer of the carbamoyl group from carbamoyl phosphate (CP) to the N(epsilon) atom of ornithine (ORN) to produce L-citrulline. This chain is Ornithine carbamoyltransferase, found in Pseudomonas syringae pv. tomato (strain ATCC BAA-871 / DC3000).